We begin with the raw amino-acid sequence, 304 residues long: Protoheme IX farnesyltransferase 1 (304 aa).

8 helical membrane-spanning segments follow: residues 24-44 (VVVL…KAPL), 47-67 (FVPW…AGAA), 99-119 (MALG…LAFT), 122-142 (LTAW…TGFL), 150-170 (IVIG…AITG), 176-196 (PLLL…ALCI), 228-248 (LVLF…LVYL), and 280-300 (YSIV…YLPL).

It belongs to the UbiA prenyltransferase family. Protoheme IX farnesyltransferase subfamily.

The protein resides in the cell inner membrane. The catalysed reaction is heme b + (2E,6E)-farnesyl diphosphate + H2O = Fe(II)-heme o + diphosphate. It participates in porphyrin-containing compound metabolism; heme O biosynthesis; heme O from protoheme: step 1/1. Functionally, converts heme B (protoheme IX) to heme O by substitution of the vinyl group on carbon 2 of heme B porphyrin ring with a hydroxyethyl farnesyl side group. This is Protoheme IX farnesyltransferase 1 from Pseudomonas paraeruginosa (strain DSM 24068 / PA7) (Pseudomonas aeruginosa (strain PA7)).